A 252-amino-acid chain; its full sequence is MGFYEGDDNDANTKAFNDKYIKDQKFATAPFWNLFPKLRDIDEYDNPLLPLPFNFNFRDLGDSALAMASGIPTVKQFDKCEELKGQSAWTTQGIWKCLVPSKAIPPLPQLDFLLPLEEIKSDKSHSHGLFFNDFNLFLKWRSHMNRLQKQRIKTRSTAVEPLARTPEDLMLNWDDLHLGNDAEYASADGSKKIVGRAQSISTTKDSNDAKPSTVKTEKIYFDDGTVDITTTTTSKGSSPQVKHKVVSVDEDN.

Residues Thr230–Asn252 are disordered.

Its subcellular location is the mitochondrion membrane. In Saccharomyces cerevisiae (strain ATCC 204508 / S288c) (Baker's yeast), this protein is Mitochondrial peculiar membrane protein 1 (MPM1).